The sequence spans 476 residues: MLAASASTQQLHNHIEYEIADIELAEFGRKELAIAEKEMPGLMALREKYHKEKPLKGARIAGSLHMTIQTAVLIETLVALGAQVRWASCNIFSTQDHAAAAIASSGIPVFAKKGETLDEYWAYTHRILEWGDQETPNMILDDGGDATGLVILGSKAEQDLSVLERPNNEEEIALYSSIRNKLSDDPSFYSRIKSSIQGVTEETTTGVARLYQMQANGSLPFPAINVNDSVTKSKFDNLYGCRESLVDGIKRATDVMVAGKIALVIGYGDVGKGSAQSLRGLGATVMIAEIDPICALQASMEGYRVVRLNDVVQNVDIFVTATGNFNVITHDHLIRMKDEAIVCNIGHFDNEIDVASLKPYQWENIKPQVDHITLPSGNKIILLAEGRLVNLGCATGHPSFVMSNSFTNQVLAQIELFTQGSNYDNQVYILPKHLDELVARLHLDKIGANLTELTEEQAAYINVPIKGPYKSEQYRY.

Substrate is bound by residues T67, D142, and E202. Residue T203–T205 participates in NAD(+) binding. K232 and D236 together coordinate substrate. Residues N237, G266–G271, E289, N324, I345–H347, and N390 contribute to the NAD(+) site.

The protein belongs to the adenosylhomocysteinase family. The cofactor is NAD(+).

It is found in the cytoplasm. It carries out the reaction S-adenosyl-L-homocysteine + H2O = L-homocysteine + adenosine. Its pathway is amino-acid biosynthesis; L-homocysteine biosynthesis; L-homocysteine from S-adenosyl-L-homocysteine: step 1/1. In terms of biological role, may play a key role in the regulation of the intracellular concentration of adenosylhomocysteine. The chain is Adenosylhomocysteinase from Prochlorococcus marinus (strain MIT 9211).